The primary structure comprises 120 residues: Ribosome-binding factor A (120 aa).

It belongs to the RbfA family. As to quaternary structure, monomer. Binds 30S ribosomal subunits, but not 50S ribosomal subunits or 70S ribosomes.

It localises to the cytoplasm. One of several proteins that assist in the late maturation steps of the functional core of the 30S ribosomal subunit. Associates with free 30S ribosomal subunits (but not with 30S subunits that are part of 70S ribosomes or polysomes). Required for efficient processing of 16S rRNA. May interact with the 5'-terminal helix region of 16S rRNA. The protein is Ribosome-binding factor A of Chlamydia pneumoniae (Chlamydophila pneumoniae).